A 448-amino-acid polypeptide reads, in one-letter code: Pre-mRNA-splicing factor SAD1 (448 aa).

At Met-1 the chain carries N-acetylmethionine. The UBP-type; degenerate zinc finger occupies 27–124 (PNYAYLETVV…NSIKFAAYPT (98 aa)). Cys-60, Cys-63, His-79, and His-85 together coordinate Zn(2+). In terms of domain architecture, USP spans 150–447 (IGFTNAATYD…ETFIQVWEKQ (298 aa)).

As to quaternary structure, component of the 45S U1.U2.U4/U6.U5 penta-snRNP particle, a subcomplex of the spliceosome.

It localises to the nucleus. Its function is as follows. Promotes the assembly of newly synthesized U4 snRNA into the U4/U6 snRNP particle. Required for splicing of pre-mRNA. This chain is Pre-mRNA-splicing factor SAD1 (SAD1), found in Saccharomyces cerevisiae (strain ATCC 204508 / S288c) (Baker's yeast).